We begin with the raw amino-acid sequence, 326 residues long: H-2 class I histocompatibility antigen, Q8 alpha chain (326 aa).

The first 21 residues, 1–21 (MALTMLLLLVAAALTLIETRA), serve as a signal peptide directing secretion. The segment at 22–111 (GPHSLRYFHT…AQRYYNQSKG (90 aa)) is alpha-1. Over 22 to 305 (GPHSLRYFHT…EPPPSTVSNM (284 aa)) the chain is Extracellular. Residue asparagine 107 is glycosylated (N-linked (GlcNAc...) asparagine). The segment at 112–203 (GSHTLQWMYG…QLRKETLLCT (92 aa)) is alpha-2. 2 cysteine pairs are disulfide-bonded: cysteine 122–cysteine 185 and cysteine 224–cysteine 280. Residues 204-295 (DPPKAHVTHH…GLPEPLTLRW (92 aa)) are alpha-3. The Ig-like C1-type domain occupies 206-294 (PKAHVTHHPR…EGLPEPLTLR (89 aa)). Asparagine 277 carries an N-linked (GlcNAc...) asparagine glycan. Positions 296–305 (EPPPSTVSNM) are connecting peptide. Residues 306 to 326 (ANVAILVVLVAWPSLELWWIL) traverse the membrane as a helical segment.

Belongs to the MHC class I family. In terms of assembly, heterodimer of an alpha chain and a beta chain (beta-2-microglobulin).

It is found in the membrane. In terms of biological role, involved in the presentation of foreign antigens to the immune system. The protein is H-2 class I histocompatibility antigen, Q8 alpha chain (H2-Q8) of Mus musculus (Mouse).